Here is a 332-residue protein sequence, read N- to C-terminus: Galactinol synthase 7 (332 aa).

K101 is a catalytic residue. Residues D117, D119, and H255 each coordinate Mn(2+).

This sequence belongs to the glycosyltransferase 8 family. Galactosyltransferase subfamily. A divalent metal cation is required as a cofactor.

The protein localises to the cytoplasm. The catalysed reaction is myo-inositol + UDP-alpha-D-galactose = alpha-D-galactosyl-(1-&gt;3)-1D-myo-inositol + UDP + H(+). Functionally, galactinol synthase involved in the biosynthesis of raffinose family oligosaccharides (RFOs) that function as osmoprotectants. May promote plant stress tolerance. This is Galactinol synthase 7 (GOLS7) from Arabidopsis thaliana (Mouse-ear cress).